The sequence spans 124 residues: Superoxide reductase (124 aa).

E14, H16, H41, H47, C111, and H114 together coordinate Fe cation.

Belongs to the desulfoferrodoxin family. Homotetramer. Fe cation serves as cofactor.

It carries out the reaction reduced [rubredoxin] + superoxide + 2 H(+) = oxidized [rubredoxin] + H2O2. Functionally, uses electrons from reduced NADP, by way of rubredoxin and an oxidoreductase, to catalyze the reduction of superoxide to hydrogen peroxide. The protein is Superoxide reductase (sorA) of Pyrococcus furiosus (strain ATCC 43587 / DSM 3638 / JCM 8422 / Vc1).